The sequence spans 1534 residues: DNA polymerase alpha catalytic subunit (1534 aa).

Over residues 1 to 12 (MDEGSADAGASG) the composition is skewed to low complexity. Disordered regions lie at residues 1–23 (MDEG…SEAV), 96–141 (THRT…LSAA), and 864–905 (FNST…GPSY). The span at 116–125 (RKRKQPRPQS) shows a compositional bias: basic residues. Low complexity predominate over residues 127–141 (RPPQQSAAAASLSAA). 2 stretches are compositionally biased toward basic and acidic residues: residues 864–882 (FNST…RPDE) and 889–898 (DEGHHVDQGK). The Zn(2+) site is built by C1340, C1343, C1383, C1386, C1422, C1427, C1448, and C1454. Residues 1340–1386 (CPSCSTTFDCPPVSSLIIGSSSGNVSNPNEGNDASINFWRRMRCPRC) form a CysA-type zinc finger. The CysB motif motif lies at 1422-1451 (CDDEGCKYSTHSVNLRVMGDSERGTICPNY).

The protein belongs to the DNA polymerase type-B family.

The protein resides in the nucleus. It carries out the reaction DNA(n) + a 2'-deoxyribonucleoside 5'-triphosphate = DNA(n+1) + diphosphate. Its function is as follows. Polymerase alpha in a complex with DNA primase is a replicative polymerase. The protein is DNA polymerase alpha catalytic subunit of Oryza sativa subsp. japonica (Rice).